The primary structure comprises 371 residues: 4-hydroxy-3-methylbut-2-en-1-yl diphosphate synthase (flavodoxin) (371 aa).

[4Fe-4S] cluster contacts are provided by Cys270, Cys273, Cys305, and Glu312.

The protein belongs to the IspG family. It depends on [4Fe-4S] cluster as a cofactor.

It catalyses the reaction (2E)-4-hydroxy-3-methylbut-2-enyl diphosphate + oxidized [flavodoxin] + H2O + 2 H(+) = 2-C-methyl-D-erythritol 2,4-cyclic diphosphate + reduced [flavodoxin]. The protein operates within isoprenoid biosynthesis; isopentenyl diphosphate biosynthesis via DXP pathway; isopentenyl diphosphate from 1-deoxy-D-xylulose 5-phosphate: step 5/6. Converts 2C-methyl-D-erythritol 2,4-cyclodiphosphate (ME-2,4cPP) into 1-hydroxy-2-methyl-2-(E)-butenyl 4-diphosphate. This is 4-hydroxy-3-methylbut-2-en-1-yl diphosphate synthase (flavodoxin) from Shewanella loihica (strain ATCC BAA-1088 / PV-4).